A 253-amino-acid polypeptide reads, in one-letter code: 5'-nucleotidase SurE (253 aa).

Residues Asp-8, Asp-9, Ser-39, and Asn-92 each contribute to the a divalent metal cation site.

It belongs to the SurE nucleotidase family. A divalent metal cation is required as a cofactor.

Its subcellular location is the cytoplasm. It carries out the reaction a ribonucleoside 5'-phosphate + H2O = a ribonucleoside + phosphate. Its function is as follows. Nucleotidase that shows phosphatase activity on nucleoside 5'-monophosphates. In Burkholderia vietnamiensis (strain G4 / LMG 22486) (Burkholderia cepacia (strain R1808)), this protein is 5'-nucleotidase SurE.